Consider the following 108-residue polypeptide: ATP synthase peripheral stalk subunit F6, mitochondrial (108 aa).

Residues 1 to 32 (MILQRLFRLSSAVQSAISVSWRRNIGITAVAF) constitute a mitochondrion transit peptide. 3 positions are modified to N6-acetyllysine: Lys-41, Lys-46, and Lys-79. Residues Lys-84 and Lys-99 each carry the N6-acetyllysine; alternate modification. An N6-succinyllysine; alternate mark is found at Lys-84 and Lys-99. The residue at position 105 (Lys-105) is an N6-acetyllysine. A Phosphoserine modification is found at Ser-108.

It belongs to the eukaryotic ATPase subunit F6 family. As to quaternary structure, component of the ATP synthase complex composed at least of ATP5F1A/subunit alpha, ATP5F1B/subunit beta, ATP5MC1/subunit c (homooctomer), MT-ATP6/subunit a, MT-ATP8/subunit 8, ATP5ME/subunit e, ATP5MF/subunit f, ATP5MG/subunit g, ATP5MK/subunit k, ATP5MJ/subunit j, ATP5F1C/subunit gamma, ATP5F1D/subunit delta, ATP5F1E/subunit epsilon, ATP5PF/subunit F6, ATP5PB/subunit b, ATP5PD/subunit d, ATP5PO/subunit OSCP. ATP synthase complex consists of a soluble F(1) head domain (subunits alpha(3) and beta(3)) - the catalytic core - and a membrane F(0) domain - the membrane proton channel (subunits c, a, 8, e, f, g, k and j). These two domains are linked by a central stalk (subunits gamma, delta, and epsilon) rotating inside the F1 region and a stationary peripheral stalk (subunits F6, b, d, and OSCP).

The protein localises to the mitochondrion. It localises to the mitochondrion inner membrane. Its function is as follows. Subunit F6, of the mitochondrial membrane ATP synthase complex (F(1)F(0) ATP synthase or Complex V) that produces ATP from ADP in the presence of a proton gradient across the membrane which is generated by electron transport complexes of the respiratory chain. ATP synthase complex consist of a soluble F(1) head domain - the catalytic core - and a membrane F(1) domain - the membrane proton channel. These two domains are linked by a central stalk rotating inside the F(1) region and a stationary peripheral stalk. During catalysis, ATP synthesis in the catalytic domain of F(1) is coupled via a rotary mechanism of the central stalk subunits to proton translocation. In vivo, can only synthesize ATP although its ATP hydrolase activity can be activated artificially in vitro. Part of the complex F(0) domain. Part of the complex F(0) domain and the peripheric stalk, which acts as a stator to hold the catalytic alpha(3)beta(3) subcomplex and subunit a/ATP6 static relative to the rotary elements. The chain is ATP synthase peripheral stalk subunit F6, mitochondrial from Bos taurus (Bovine).